The following is a 1706-amino-acid chain: Brefeldin A-inhibited guanine nucleotide-exchange protein 4 (1706 aa).

In terms of domain architecture, SEC7 spans 555–742 (MLEQRRAYKI…GSLYDRVVKE (188 aa)). Residue Glu657 is part of the active site.

Homodimer.

It is found in the cytoplasm. The protein localises to the cytosol. It localises to the membrane. Inhibited by brefeldin A. Activates the ARF proteins by exchanging bound GDP for free GTP. Plays a role in vesicular protein sorting. The chain is Brefeldin A-inhibited guanine nucleotide-exchange protein 4 (BIG4) from Arabidopsis thaliana (Mouse-ear cress).